We begin with the raw amino-acid sequence, 336 residues long: 3-isopropylmalate dehydrogenase (336 aa).

Residues Arg86, Arg96, Arg117, and Asp201 each contribute to the substrate site. Residues Asp201, Asp225, and Asp229 each contribute to the Mg(2+) site. An NAD(+)-binding site is contributed by 258-270 (GAAFDIAGKGIAN).

Belongs to the isocitrate and isopropylmalate dehydrogenases family. As to quaternary structure, homotetramer. The cofactor is Mg(2+). Mn(2+) is required as a cofactor.

The protein localises to the cytoplasm. It catalyses the reaction (2R,3S)-3-isopropylmalate + NAD(+) = 4-methyl-2-oxopentanoate + CO2 + NADH. The protein operates within amino-acid biosynthesis; L-leucine biosynthesis; L-leucine from 3-methyl-2-oxobutanoate: step 3/4. Functionally, catalyzes the oxidation of 3-carboxy-2-hydroxy-4-methylpentanoate (3-isopropylmalate) to 3-carboxy-4-methyl-2-oxopentanoate. The product decarboxylates to 4-methyl-2 oxopentanoate. This is 3-isopropylmalate dehydrogenase (leuB) from Saccharolobus solfataricus (strain ATCC 35092 / DSM 1617 / JCM 11322 / P2) (Sulfolobus solfataricus).